The following is a 259-amino-acid chain: Probable ABC transporter permease protein RBE_1340 (259 aa).

The next 5 membrane-spanning stretches (helical) occupy residues 25–45 (IFSLAAITSIIRPPLYFSLII), 49–69 (LFIGFYSLPVVAMTTFFSGAV), 148–168 (VIAAIITMPCLVLIGDVIGVM), 195–215 (PIDVISGLVKAGVFGFIISII), and 237–257 (AVVNSSILILISNYLITELFF).

Belongs to the MlaE permease family.

The protein resides in the cell inner membrane. Its function is as follows. Could be part of an ABC transporter complex. In Rickettsia bellii (strain RML369-C), this protein is Probable ABC transporter permease protein RBE_1340.